A 976-amino-acid polypeptide reads, in one-letter code: Vacuolar membrane protease (976 aa).

The Cytoplasmic segment spans residues 1–15; that stretch reads MKLKSVFRSVLKYRK. The helical transmembrane segment at 16–36 threads the bilayer; that stretch reads TNLSLLLLITYSIITLLYIFD. The Vacuolar segment spans residues 37-359; that stretch reads HERYKLNLPK…KFFVISAKTL (323 aa). Residues N96 and N121 are each glycosylated (N-linked (GlcNAc...) asparagine). Zn(2+) is bound by residues H156 and D168. N-linked (GlcNAc...) asparagine glycosylation is present at N189. The active-site Proton acceptor is the E200. E201 is a binding site for Zn(2+). N-linked (GlcNAc...) asparagine glycosylation is found at N212 and N217. Positions 226 and 300 each coordinate Zn(2+). A helical membrane pass occupies residues 360–380; that stretch reads FYWNCIFLLVSPVVAIGLYLI. At 381-392 the chain is on the cytoplasmic side; that stretch reads SRDRMTWKSHSW. Residues 393–412 traverse the membrane as a helical segment; that stretch reads LSWTRFPLSLAAGIIVQKLF. Over 413 to 428 the chain is Vacuolar; sequence SNDIIRSNPLTFSRNY. The helical transmembrane segment at 429 to 449 threads the bilayer; it reads FWPISAFFTQVIFTSYVLINC. Residues 450 to 461 are Cytoplasmic-facing; sequence SNFFFPCADMKS. Residues 462-482 form a helical membrane-spanning segment; that stretch reads LSIIELFIILWTILLFTSKLL. Topologically, residues 483 to 496 are vacuolar; sequence YSSDYRYTGLYPLS. The chain crosses the membrane as a helical span at residues 497 to 517; that stretch reads IFFLLSTIAAILRLLALALGM. Residues 518-627 are Cytoplasmic-facing; that stretch reads RTRKRLGREC…NSLKLEYTDY (110 aa). The interval 528 to 610 is disordered; that stretch reads RDHHSNYSSH…PLLKGSNSME (83 aa). A compositionally biased stretch (polar residues) spans 549–558; sequence NLEQPQDQFT. Over residues 559–570 the composition is skewed to low complexity; the sequence is SSQDDQASIQDD. Over residues 582-601 the composition is skewed to basic and acidic residues; that stretch reads NVDEDHGMDSSSQQHDERVP. Residues 628 to 648 traverse the membrane as a helical segment; that stretch reads AWIIQFLLIVPIPSFILFNSV. The Vacuolar segment spans residues 649–668; that stretch reads DVIMDALNHTVQEGSKATFD. N-linked (GlcNAc...) asparagine glycosylation is present at N656. The helical transmembrane segment at 669–689 threads the bilayer; sequence VLRFGMVGSILMALPILPFFY. Over 690–692 the chain is Cytoplasmic; that stretch reads KVN. The chain crosses the membrane as a helical span at residues 693–713; that stretch reads YITISLTALLFLISASKTLLV. The Vacuolar segment spans residues 714-976; it reads HPFTNSNPLK…LVIVKDAIIL (263 aa). Residues N768, N796, N811, N866, and N937 are each glycosylated (N-linked (GlcNAc...) asparagine).

The protein belongs to the peptidase M28 family. The cofactor is Zn(2+).

The protein localises to the vacuole membrane. May be involved in vacuolar sorting and osmoregulation. The chain is Vacuolar membrane protease from Saccharomyces cerevisiae (strain AWRI1631) (Baker's yeast).